The chain runs to 122 residues: Large ribosomal subunit protein uL14 (122 aa).

This sequence belongs to the universal ribosomal protein uL14 family. In terms of assembly, part of the 50S ribosomal subunit. Forms a cluster with proteins L3 and L19. In the 70S ribosome, L14 and L19 interact and together make contacts with the 16S rRNA in bridges B5 and B8.

In terms of biological role, binds to 23S rRNA. Forms part of two intersubunit bridges in the 70S ribosome. The protein is Large ribosomal subunit protein uL14 of Bacillus velezensis (strain DSM 23117 / BGSC 10A6 / LMG 26770 / FZB42) (Bacillus amyloliquefaciens subsp. plantarum).